Consider the following 226-residue polypeptide: ATP-dependent dethiobiotin synthetase BioD (226 aa).

12–17 (GVGKTV) is a binding site for ATP. Mg(2+) is bound at residue threonine 16. Lysine 37 is an active-site residue. Substrate is bound at residue threonine 41. ATP contacts are provided by residues aspartate 49, 108–111 (EGAG), 169–170 (GS), and 197–199 (PAG). 2 residues coordinate Mg(2+): aspartate 49 and glutamate 108.

The protein belongs to the dethiobiotin synthetase family. As to quaternary structure, homodimer. The cofactor is Mg(2+).

It localises to the cytoplasm. The catalysed reaction is (7R,8S)-7,8-diammoniononanoate + CO2 + ATP = (4R,5S)-dethiobiotin + ADP + phosphate + 3 H(+). It participates in cofactor biosynthesis; biotin biosynthesis; biotin from 7,8-diaminononanoate: step 1/2. Catalyzes a mechanistically unusual reaction, the ATP-dependent insertion of CO2 between the N7 and N8 nitrogen atoms of 7,8-diaminopelargonic acid (DAPA, also called 7,8-diammoniononanoate) to form a ureido ring. This Mycobacterium leprae (strain Br4923) protein is ATP-dependent dethiobiotin synthetase BioD.